We begin with the raw amino-acid sequence, 256 residues long: MSSGERVAKVVLVDIEGTTTSISFVHDVLFPYAKQNVEKFLRDFWKEDDIKHIVQDLQQVPKFADYKALLSAPPTEVDIELIAGFVRYLIDQDLKVTPMKTLQGLIWAQGYANGELKGHVYEDVPAAFEAWRAAGLRIAVYSSGSVAAQKLIFGHSLAGNLQPHLSAYFDTHVGHKQEQQSYENIAKQLKEDPKQILFLTDIPGEAAAACSAGLQAIILQRPGNAALADDQKASFELIPDFKPLHNLKLPINKSQA.

Residues aspartate 14 and glutamate 16 each contribute to the Mg(2+) site. Residues 142 to 143 (SS) and lysine 176 each bind substrate. Aspartate 201 lines the Mg(2+) pocket.

This sequence belongs to the HAD-like hydrolase superfamily. MasA/MtnC family. As to quaternary structure, monomer. Mg(2+) is required as a cofactor.

It is found in the cytoplasm. It localises to the nucleus. It carries out the reaction 5-methylsulfanyl-2,3-dioxopentyl phosphate + H2O = 1,2-dihydroxy-5-(methylsulfanyl)pent-1-en-3-one + phosphate. It functions in the pathway amino-acid biosynthesis; L-methionine biosynthesis via salvage pathway; L-methionine from S-methyl-5-thio-alpha-D-ribose 1-phosphate: step 3/6. It participates in amino-acid biosynthesis; L-methionine biosynthesis via salvage pathway; L-methionine from S-methyl-5-thio-alpha-D-ribose 1-phosphate: step 4/6. In terms of biological role, bifunctional enzyme that catalyzes the enolization of 2,3-diketo-5-methylthiopentyl-1-phosphate (DK-MTP-1-P) into the intermediate 2-hydroxy-3-keto-5-methylthiopentenyl-1-phosphate (HK-MTPenyl-1-P), which is then dephosphorylated to form the acireductone 1,2-dihydroxy-3-keto-5-methylthiopentene (DHK-MTPene). The protein is Enolase-phosphatase E1 of Drosophila sechellia (Fruit fly).